Reading from the N-terminus, the 322-residue chain is Beta-1,4-galactosyltransferase 7 (322 aa).

Over 1–9 the chain is Cytoplasmic; sequence MVNISTINW. A helical; Signal-anchor for type II membrane protein membrane pass occupies residues 10 to 30; sequence VFVCGLSFCLGGIAVLSLMPL. Topologically, residues 31–322 are lumenal; sequence GSDCVCPLSN…TAAAASAVQT (292 aa). Positions 82, 84, 145, and 146 each coordinate UDP-alpha-D-galactose. A Mn(2+)-binding site is contributed by Asp-147. The UDP-alpha-D-galactose site is built by Tyr-177, Gly-185, Trp-207, and Gly-208. A beta-D-xylose-binding site is contributed by Leu-209. Glu-210 is a binding site for UDP-alpha-D-galactose. Beta-D-xylose is bound by residues Asp-211 and Asp-212. The N-linked (GlcNAc...) asparagine glycan is linked to Asn-236. Residues His-241, His-243, and Arg-250 each contribute to the UDP-alpha-D-galactose site. The Mn(2+) site is built by His-241 and His-243. Disulfide bonds link Cys-255-Cys-310 and Cys-300-Cys-308.

The protein belongs to the glycosyltransferase 7 family. Requires Mn(2+) as cofactor. As to expression, expressed in male and female adults. Expressed in head.

The protein resides in the golgi apparatus membrane. It catalyses the reaction 3-O-(beta-D-xylosyl)-L-seryl-[protein] + UDP-alpha-D-galactose = 3-O-(beta-D-galactosyl-(1-&gt;4)-beta-D-xylosyl)-L-seryl-[protein] + UDP + H(+). It functions in the pathway protein modification; protein glycosylation. Functionally, transfers galactose from UDP-D-Galactose (UDP-Gal) to the acceptor xylose residue in the linkage tetrasaccharide region of the glycosaminoglycan side chain of proteoglycans. No activity towards beta-GlcNAc, beta-Glc, beta-Gal, and beta-GalNAc as acceptors. The chain is Beta-1,4-galactosyltransferase 7 from Drosophila melanogaster (Fruit fly).